The chain runs to 400 residues: MAAEIQPQPLTRKPILLQRVEGSQEVVNMAVIVPKEEGVISVSEDRTVRVWLKRDSGQYWPSIYHAMPSPCSCMSFNPETRRLSIGLDNGTISEFILSEDYNKMTPVKNYQAHQSRVTMVLFVLELEWVLSTGQDKQFAWHCSESGQRLGGYRTSAVASGLQFDVETRHVFIGDHSGQVTILKLEQENCTLLTSFRGHTGGVTALCWDPVQRVLFSGSSDHSVIMWDIGGRKGTAIELQGHNDKVQALSYAQHTRQLISCGGDGGIVVWNMDVERQETPEWLDSDSCQKCDQPFFWNFKQMWDSKKIGLRQHHCRKCGKAVCGKCSSKRSSIPLMGFEFEVRVCDSCHEAITDEERAPTATFHDSKHNIVHVHFDATRGWLLTSGTDKVIKLWDMTPVVS.

WD repeat units lie at residues 22-61 (GSQE…QYWP), 66-105 (AMPS…NKMT), 112-150 (AHQS…QRLG), 153-192 (RTSA…CTLL), 197-236 (GHTG…GTAI), and 240-279 (GHND…QETP). An FYVE-type zinc finger spans residues 281 to 352 (WLDSDSCQKC…VCDSCHEAIT (72 aa)). 8 residues coordinate Zn(2+): C287, C290, C314, C317, C322, C325, C344, and C347. One copy of the WD 7 repeat lies at 364–399 (DSKHNIVHVHFDATRGWLLTSGTDKVIKLWDMTPVV).

Homodimer. Interacts (via WD repeats 1-3) with AKT1, AKT2, PRKCZ and PRKCI. Interacts with VAMP2. Forms a complex with VAMP2 and PRKCZ. Interacts with FOXO1. Forms a complex with AKT1 and FOXO1. In terms of tissue distribution, highly expressed in the brain (at protein level).

The protein localises to the endosome. The protein resides in the early endosome. It localises to the cytoplasm. Acts in an adapter protein-like fashion to mediate the interaction between the kinase PRKCZ and its substrate VAMP2 and increases the PRKCZ-dependent phosphorylation of VAMP2. Positively regulates adipocyte differentiation, by facilitating the phosphorylation and thus inactivation of the anti-adipogenetic transcription factor FOXO1 by the kinase AKT1. Plays a role in endosomal control of AKT2 signaling; required for insulin-stimulated AKT2 phosphorylation and glucose uptake and insulin-stimulated phosphorylation of AKT2 substrates. Participates in transferrin receptor endocytosis. The chain is WD repeat and FYVE domain-containing protein 2 (Wdfy2) from Mus musculus (Mouse).